We begin with the raw amino-acid sequence, 425 residues long: AFP homolog 2 (425 aa).

Disordered regions lie at residues methionine 1–glutamate 207 and proline 288–asparagine 327. A necessary and sufficient for the interaction with TOPLESS region spans residues leucine 7 to glycine 17. Residues glycine 20 to serine 34 show a composition bias toward low complexity. Basic and acidic residues predominate over residues tyrosine 37–asparagine 54. Over residues proline 66 to glutamine 81 the composition is skewed to low complexity. The segment covering asparagine 124–glutamate 140 has biased composition (basic and acidic residues). Composition is skewed to polar residues over residues serine 146 to alanine 158, threonine 185 to arginine 197, and proline 288 to threonine 299. A necessary and sufficient for the interaction with the JAZ proteins region spans residues threonine 322–threonine 425.

Belongs to the Ninja family. As to quaternary structure, component of a complex at least composed of TOPLESS, TPR2, TPR3, TIFY4B/PPD2, MYC3/ATR2 and TIFY3B/JAZ12. Interacts (via C-terminus) with TIFY10A/JAZ1; TIFY10B/JAZ2; TIFY6B/JAZ3; TIFY6A/JAZ4; TIFY11A/JAZ5; TIFY11B/JAZ6; TIFY7/JAZ9; TIFY9/JAZ10; TIFY3A/JAZ11; TIFY3B/JAZ12; TIFY4A/PPD1; TIFY4B/PPD2 and TIFY8 (via TIFY domain). Interacts with TOPLESS. Interacts with PAT1H1.

It is found in the nucleus. In terms of biological role, acts as a transcriptional repressor. Negative regulator of jasmonate responses. Connects the JAZ proteins and the non-JAZ protein TIFY8 with the TOPLESS corepressors. The protein is AFP homolog 2 of Arabidopsis thaliana (Mouse-ear cress).